The sequence spans 172 residues: uncharacterized protein (172 aa).

The segment covering 1–17 (MISLDKDENEIEHHNEE) has biased composition (basic and acidic residues). The tract at residues 1–27 (MISLDKDENEIEHHNEENSLVEQETAP) is disordered. The chain crosses the membrane as a helical span at residues 129–151 (IVTVLIGIIVAIFVLVVIGIAAF).

It localises to the membrane. This is an uncharacterized protein from Bacillus subtilis (strain 168).